The primary structure comprises 448 residues: Antizyme inhibitor 1 (448 aa).

Belongs to the Orn/Lys/Arg decarboxylase class-II family. ODC antizyme inhibitor subfamily. As to quaternary structure, monomer. Interacts with OAZ1 and OAZ3; this interaction disrupts the interaction between the antizyme and ODC1. In terms of processing, ubiquitinated, leading to its proteasomal degradation; a process that is reduced in presence of antizyme OAZ1. In terms of tissue distribution, expressed in various tissues including liver, heart and kidney.

The protein localises to the nucleus. Its function is as follows. Antizyme inhibitor (AZI) protein that positively regulates ornithine decarboxylase (ODC) activity and polyamine uptake. AZI is an enzymatically inactive ODC homolog that counteracts the negative effect of ODC antizymes (AZs) OAZ1, OAZ2 and OAZ3 on ODC activity by competing with ODC for antizyme-binding. Inhibits antizyme-dependent ODC degradation and releases ODC monomers from their inactive complex with antizymes, leading to formation of the catalytically active ODC homodimer and restoring polyamine production. The protein is Antizyme inhibitor 1 (Azin1) of Rattus norvegicus (Rat).